Consider the following 197-residue polypeptide: Small ribosomal subunit protein uS5 (197 aa).

Residues methionine 1–glutamate 17 are compositionally biased toward basic and acidic residues. Disordered regions lie at residues methionine 1–phenylalanine 22 and asparagine 158–alanine 197. One can recognise an S5 DRBM domain in the interval phenylalanine 22–valine 85. Residues lysine 172–isoleucine 186 show a composition bias toward basic and acidic residues.

Belongs to the universal ribosomal protein uS5 family. As to quaternary structure, part of the 30S ribosomal subunit. Contacts proteins S4 and S8.

Its function is as follows. With S4 and S12 plays an important role in translational accuracy. Located at the back of the 30S subunit body where it stabilizes the conformation of the head with respect to the body. The chain is Small ribosomal subunit protein uS5 from Jannaschia sp. (strain CCS1).